We begin with the raw amino-acid sequence, 105 residues long: UPF0145 protein Sala_0338 (105 aa).

Belongs to the UPF0145 family.

This Sphingopyxis alaskensis (strain DSM 13593 / LMG 18877 / RB2256) (Sphingomonas alaskensis) protein is UPF0145 protein Sala_0338.